The following is a 461-amino-acid chain: Aldehyde dehydrogenase LUC3 (461 aa).

Residue 215–220 (GSTATG) participates in NAD(+) binding. Catalysis depends on residues Glu237 and Cys271.

The protein belongs to the aldehyde dehydrogenase family.

The catalysed reaction is an aldehyde + NAD(+) + H2O = a carboxylate + NADH + 2 H(+). It participates in mycotoxin biosynthesis. Functionally, aldehyde dehydrogenase; part of the gene cluster that mediates the biosynthesis of the mycotoxin lucilactaene and the lucilactaene-related compound NG-391 that act as cell cycle inhibitors with potent growth inhibitory activity against malarial parasites, moderate growth inhibitory activity against cancer cells, and no activity against bacteria and fungi. LUC3 is important for lucilactaene biosynthesis and performs the oxidation of the C-20 alcoholic analog prelucilactaene G into a carboxylic derivative that has still to be identified. The pathway begins with the hybrid PKS-NRPS synthetase LUC5 which is responsible for the condensation of one acetyl-coenzyme A (CoA) unit with six malonyl-CoA units and the amide linkage of the arising heptaketide and homoserine, subsequently releasing the first intermediate prelucilactaene B. Both the cytochrome P450 monooxygenase LUC2 and the hydrolase LUC6 function in parallel in modification of prelucilactaene B. LUC6 may catalyze the 2-pyrrolidone ring formation to form prelucilactaene C from prelucilactaene B, followed by C-15 hydroxylation by the same enzyme to give prelucilactaene D, which is then converted to prelucilactaene E by epoxidation, and finally to prelucilactaene F by cyclization. Prelucilactane D, prelucilactaene E, and prelucilactaene F can be converted to dihydrolucilactaene, NG391, and lucilactaene, respectively, via C-20 methyl group hydroxylation by the cytochrome P450 monooxygenase LUC2. However, LUC2, unlike FUS8 in fusarin C biosynthesis, is not enough for the full oxidation of the C-20 methyl group into carboxylic acid, which is a prerequisite for the final methylation step. The aldehyde dehydrogenase LUC3 is involved in the biosynthesis by further oxidation of the C-20 alcoholic analog prelucilactaene G into a carboxylic derivative. This unidentified carboxylic derivative may be converted to demethyllucilactaene. As the last step, the methyltransferase LUC1 methylates the hydroxyl group at C-21 of demethyllucilactaene to generate lucilactaene. This Fusarium sp protein is Aldehyde dehydrogenase LUC3.